The primary structure comprises 656 residues: Protein NO VEIN-LIKE (656 aa).

The interval 283–375 (DKDYCGKHTR…HVKQKIPKSA (93 aa)) is disordered. Residues 299–308 (EENDSADYEV) show a composition bias toward acidic residues. The span at 342–353 (ESRNHEKSDSPK) shows a compositional bias: basic and acidic residues. Residues 354 to 371 (LLRRGPSKLRRGHVKQKI) are compositionally biased toward basic residues.

This Arabidopsis thaliana (Mouse-ear cress) protein is Protein NO VEIN-LIKE.